A 475-amino-acid polypeptide reads, in one-letter code: Argininosuccinate lyase (475 aa).

It belongs to the lyase 1 family. Argininosuccinate lyase subfamily.

The protein resides in the cytoplasm. The enzyme catalyses 2-(N(omega)-L-arginino)succinate = fumarate + L-arginine. The protein operates within amino-acid biosynthesis; L-arginine biosynthesis; L-arginine from L-ornithine and carbamoyl phosphate: step 3/3. This is Argininosuccinate lyase from Leifsonia xyli subsp. xyli (strain CTCB07).